Consider the following 585-residue polypeptide: Acetolactate synthase large subunit (585 aa).

Residue E60 participates in thiamine diphosphate binding. Residues R162, H272–R293, and D315–D334 contribute to the FAD site. A thiamine pyrophosphate binding region spans residues Q407–W486. Mg(2+) is bound by residues D457 and N484.

It belongs to the TPP enzyme family. As to quaternary structure, dimer of large and small chains. It depends on Mg(2+) as a cofactor. Requires thiamine diphosphate as cofactor.

Its subcellular location is the plastid. It localises to the chloroplast. It catalyses the reaction 2 pyruvate + H(+) = (2S)-2-acetolactate + CO2. It participates in amino-acid biosynthesis; L-isoleucine biosynthesis; L-isoleucine from 2-oxobutanoate: step 1/4. It functions in the pathway amino-acid biosynthesis; L-valine biosynthesis; L-valine from pyruvate: step 1/4. The protein is Acetolactate synthase large subunit (ilvB) of Cyanidium caldarium (Red alga).